Here is a 714-residue protein sequence, read N- to C-terminus: VIN3-like protein 2 (714 aa).

The segment at arginine 164–alanine 232 adopts a PHD-type zinc-finger fold. The short motif at tryptophan 239 to alanine 246 is the Nuclear localization signal element. The Fibronectin type-III domain maps to glycine 366–glutamate 463. A compositionally biased stretch (polar residues) spans leucine 478 to aspartate 498. The disordered stretch occupies residues leucine 478–aspartate 530. Residues serine 602–histidine 714 are VIN3-Interacting Domain (VID).

As to quaternary structure, self-interacts. Interacts with VIN3 and VIL1. Component of the plant homeodomain / polycomb repressive complex 2 (PHD-PRC2) large complex during prolonged cold, composed of core PRC2 components (VRN2, EZA1, FIE and MSI1), and three related PHD finger proteins (VIL1, VIL2 and VIN3) that mediates histone H3 trimethylation on 'Lys-27' (H3K27me3).

It localises to the nucleus. Maybe involved in both the vernalization and photoperiod pathways by regulating gene expression. Binds preferentially to dimethylated histone H3 'Lys-9' (H3K9me2). Promotes flowering in non-inductive photoperiods (e.g. short days) through the maintenance of the epigenetically repressed state of MAF5 via H3K9me2 and plant homeodomain / polycomb repressive complex 2 (PHD-PRC2)-dependent H3K27me3. The protein is VIN3-like protein 2 (VIL2) of Arabidopsis thaliana (Mouse-ear cress).